We begin with the raw amino-acid sequence, 1315 residues long: Activating molecule in BECN1-regulated autophagy protein 1A (1315 aa).

WD repeat units follow at residues 50–89, 92–132, and 134–174; these read DSPR…CVHS, GHRR…ESWL, and ESNS…TVVK. Disordered stretches follow at residues 294–322, 342–409, 426–463, 502–526, 545–610, 630–660, 681–736, 985–1134, 1181–1208, and 1286–1315; these read RVPS…ARTE, FSSV…QRTG, FQSP…SSSI, NNNM…NPPH, SRRW…DTGQ, VYRQ…DNDY, RDSV…PRNA, HSDG…STGQ, GSQT…PESL, and LLSS…EYGR. A compositionally biased stretch (polar residues) spans 351-360; it reads NMRNHSSSSG. Basic and acidic residues predominate over residues 378–388; the sequence is PGREGGGRHPG. Composition is skewed to polar residues over residues 394-409 and 426-435; these read SGLN…QRTG and FQSPVYTSAS. Composition is skewed to polar residues over residues 552 to 581 and 633 to 647; these read GQPS…QSNE and QSAS…QGAL. The span at 696 to 715 shows a compositional bias: low complexity; the sequence is RPLSSNPSSLSPSPVPNAES. Positions 716 to 725 are enriched in acidic residues; it reads SEVDFEEFEE. Positions 1009 to 1021 are enriched in low complexity; that stretch reads PSSSRSGDRAGSS. The segment covering 1022–1031 has biased composition (basic and acidic residues); it reads RTDRRSRRDI. A compositionally biased stretch (polar residues) spans 1047–1060; that stretch reads SVTSQGTQTQNQRL. 2 short sequence motifs (TQT motif) span residues 1053 to 1055 and 1065 to 1067; these read TQT. The segment covering 1061–1072 has biased composition (basic and acidic residues); the sequence is QHAETQTDRDLP. Residues 1076–1090 show a composition bias toward polar residues; the sequence is QQPSTSQGSQVTDAT. The span at 1091–1103 shows a compositional bias: acidic residues; sequence ESLDFETLPEDSG. Composition is skewed to polar residues over residues 1125-1134 and 1181-1193; these read SEPSTDSTGQ and GSQT…NRTR. Residues 1286-1307 are compositionally biased toward low complexity; sequence LLSSSPSLSPVNNSNYSNSDSS.

Belongs to the WD repeat AMBRA1 family. As to quaternary structure, component of the DCX(AMBRA1) E3 ubiquitin ligase complex.

The protein localises to the endoplasmic reticulum. It localises to the cytoplasm. Its subcellular location is the cytoskeleton. The protein resides in the cytoplasmic vesicle. It is found in the autophagosome. The protein localises to the mitochondrion. It localises to the cytosol. Its subcellular location is the nucleus. The protein resides in the cell junction. It is found in the focal adhesion. It participates in protein modification; protein ubiquitination. Its function is as follows. Substrate-recognition component of a DCX (DDB1-CUL4-X-box) E3 ubiquitin-protein ligase complex involved in cell cycle control and autophagy. The DCX(AMBRA1) complex specifically mediates the polyubiquitination of target proteins. Acts as an upstream master regulator of the transition from G1 to S cell phase: ambra1a specifically recognizes and binds phosphorylated cyclin-D (ccnd1, ccnd2 and ccnd3), leading to cyclin-D ubiquitination by the DCX(AMBRA1) complex and subsequent degradation. Acts as a regulator of Cul5-RING (CRL5) E3 ubiquitin-protein ligase complexes by mediating ubiquitination and degradation of Elongin-C (eloc) component of CRL5 complexes. Acts as a key regulator of autophagy by modulating the BECN1-PIK3C3 complex: controls protein turnover during neuronal development, and regulates normal cell survival and proliferation. In normal conditions, ambra1a is tethered to the cytoskeleton via interaction with dyneins light chains. Upon autophagy induction, ambra1a is released from the cytoskeletal docking site to induce autophagosome nucleation by mediating ubiquitination of proteins involved in autophagy. Also acts as an activator of mitophagy. Required for skeletal muscle development. The sequence is that of Activating molecule in BECN1-regulated autophagy protein 1A from Danio rerio (Zebrafish).